The sequence spans 493 residues: Glycerol kinase (493 aa).

Threonine 11 contacts ADP. Positions 11, 12, and 13 each coordinate ATP. Threonine 11 provides a ligand contact to sn-glycerol 3-phosphate. Arginine 15 lines the ADP pocket. Arginine 80, glutamate 81, tyrosine 132, and aspartate 241 together coordinate sn-glycerol 3-phosphate. 5 residues coordinate glycerol: arginine 80, glutamate 81, tyrosine 132, aspartate 241, and glutamine 242. ADP-binding residues include threonine 263 and glycine 306. ATP contacts are provided by threonine 263, glycine 306, glutamine 310, and glycine 408. Glycine 408 is an ADP binding site.

It belongs to the FGGY kinase family.

The catalysed reaction is glycerol + ATP = sn-glycerol 3-phosphate + ADP + H(+). Its pathway is polyol metabolism; glycerol degradation via glycerol kinase pathway; sn-glycerol 3-phosphate from glycerol: step 1/1. Its activity is regulated as follows. Inhibited by fructose 1,6-bisphosphate (FBP). In terms of biological role, key enzyme in the regulation of glycerol uptake and metabolism. Catalyzes the phosphorylation of glycerol to yield sn-glycerol 3-phosphate. In Cereibacter sphaeroides (strain ATCC 17025 / ATH 2.4.3) (Rhodobacter sphaeroides), this protein is Glycerol kinase.